Here is a 1080-residue protein sequence, read N- to C-terminus: Histone-lysine N-methyltransferase, H3 lysine-4 specific (1080 aa).

Disordered regions lie at residues 1–46, 54–73, and 78–121; these read MSNY…SQYN, NDGTRRRYNDDRPHSSNNAS, and YATN…SSGS. Positions 1-230 are binds SWD2; the sequence is MSNYYRRAHA…THRKCRNSLI (230 aa). Over residues 11-28 the composition is skewed to polar residues; the sequence is SSGSYRQPQEQPQYSRSG. A compositionally biased stretch (low complexity) spans 29–46; the sequence is HYQYSNGHSHQQYSSQYN. The span at 54-67 shows a compositional bias: basic and acidic residues; the sequence is NDGTRRRYNDDRPH. 2 stretches are compositionally biased toward polar residues: residues 78–87 and 99–121; these read YATNNSQSGP and RGMSQSRYSNSNVHNTLASSSGS. Residues 230–569 form a binds RNA region; the sequence is ILLPRISYDR…ALDHANFPEL (340 aa). Positions 356–569 are binds SHG1; the sequence is KKLQKLQENL…ALDHANFPEL (214 aa). Ser-625 is subject to Phosphoserine. The disordered stretch occupies residues 646-729; it reads AHLLNEETDS…DQNGSSDVLD (84 aa). Residues 674 to 692 are compositionally biased toward acidic residues; the sequence is DEEDENMTSSSSEEEEEEA. Over residues 693–712 the composition is skewed to basic and acidic residues; the sequence is PDKKFKSESEPTTPESDHLH. Positions 762 to 938 are binds SPP1; sequence MDLQNAIKDE…SLNQLNKRKK (177 aa). A contributes to RNA binding region spans residues 762 to 938; that stretch reads MDLQNAIKDE…SLNQLNKRKK (177 aa). The required for catalytic activity stretch occupies residues 762 to 938; the sequence is MDLQNAIKDE…SLNQLNKRKK (177 aa). Thr-875 is modified (phosphothreonine). 2 stretches are compositionally biased toward basic and acidic residues: residues 877–890 and 899–909; these read ELCQREESSNKEPS and SSRDNRASNRR. Positions 877–909 are disordered; the sequence is ELCQREESSNKEPSDSVPQEVSSSRDNRASNRR. The RxxxRR motif signature appears at 904–909; it reads RASNRR. Residues 938-1055 form the SET domain; the sequence is KPVMFARSAI…ASEELTYDYK (118 aa). S-adenosyl-L-methionine is bound at residue Tyr-1054. The 17-residue stretch at 1064–1080 folds into the Post-SET domain; sequence ERLPCLCGAPNCKGFLN.

Belongs to the class V-like SAM-binding methyltransferase superfamily. Component of the Set1C/COMPASS complex which consists of SET1(2), BRE2(2), SPP1(2), SDC1(1), SHG1(1), SWD1(1), SWD2(1), and SWD3(1). Interacts with MEC3.

It is found in the nucleus. The protein localises to the chromosome. The catalysed reaction is L-lysyl(4)-[histone H3] + 3 S-adenosyl-L-methionine = N(6),N(6),N(6)-trimethyl-L-lysyl(4)-[histone H3] + 3 S-adenosyl-L-homocysteine + 3 H(+). The enzyme catalyses N(6)-methyl-L-lysyl(4)-[histone H3] + S-adenosyl-L-methionine = N(6),N(6)-dimethyl-L-lysyl(4)-[histone H3] + S-adenosyl-L-homocysteine + H(+). It catalyses the reaction N(6),N(6)-dimethyl-L-lysyl(4)-[histone H3] + S-adenosyl-L-methionine = N(6),N(6),N(6)-trimethyl-L-lysyl(4)-[histone H3] + S-adenosyl-L-homocysteine + H(+). Catalytic component of the COMPASS (Set1C) complex that specifically mono-, di- and trimethylates histone H3 to form H3K4me1/2/3. Binds RNAs involved in chromosome segregation, splicing and transcriptional regulation; appears to bind transcripts both co- and post-transcriptionally and binding might negatively affect its histone methyltransferase activity. COMPASS recognizes ubiquitinated H2B on one face of the nucleosome which stimulates the methylation of H3 on the opposing face. Plays a role in telomere length maintenance and transcription elongation regulation. The sequence is that of Histone-lysine N-methyltransferase, H3 lysine-4 specific from Saccharomyces cerevisiae (strain ATCC 204508 / S288c) (Baker's yeast).